A 92-amino-acid polypeptide reads, in one-letter code: C-C motif chemokine 3 (92 aa).

The N-terminal stretch at 1–26 (MQVSTAALAVLLCTVALCNRISATFA) is a signal peptide. 2 disulfides stabilise this stretch: Cys-33-Cys-57 and Cys-34-Cys-73.

The protein belongs to the intercrine beta (chemokine CC) family. As to quaternary structure, self-associates. Also heterodimer of MIP-1-alpha(4-69) and MIP-1-beta(3-69). Interacts with CCR1.

The protein localises to the secreted. In terms of biological role, monokine with inflammatory and chemokinetic properties. Binds to CCR1, CCR4 and CCR5. One of the major HIV-suppressive factors produced by CD8+ T-cells. Recombinant MIP-1-alpha induces a dose-dependent inhibition of different strains of HIV-1, HIV-2, and simian immunodeficiency virus (SIV). The sequence is that of C-C motif chemokine 3 (CCL3) from Macaca mulatta (Rhesus macaque).